A 448-amino-acid polypeptide reads, in one-letter code: Tubulin beta chain (448 aa).

8 residues coordinate GTP: Gln11, Glu69, Ser138, Gly142, Thr143, Gly144, Asn204, and Asn226. Glu69 serves as a coordination point for Mg(2+). The segment at 425–448 (YQDASISEGEEEYLEEEEPLEHEE) is disordered. Over residues 432 to 448 (EGEEEYLEEEEPLEHEE) the composition is skewed to acidic residues.

The protein belongs to the tubulin family. In terms of assembly, dimer of alpha and beta chains. A typical microtubule is a hollow water-filled tube with an outer diameter of 25 nm and an inner diameter of 15 nM. Alpha-beta heterodimers associate head-to-tail to form protofilaments running lengthwise along the microtubule wall with the beta-tubulin subunit facing the microtubule plus end conferring a structural polarity. Microtubules usually have 13 protofilaments but different protofilament numbers can be found in some organisms and specialized cells. Mg(2+) serves as cofactor.

The protein resides in the cytoplasm. It localises to the cytoskeleton. Its function is as follows. Tubulin is the major constituent of microtubules, a cylinder consisting of laterally associated linear protofilaments composed of alpha- and beta-tubulin heterodimers. Microtubules grow by the addition of GTP-tubulin dimers to the microtubule end, where a stabilizing cap forms. Below the cap, tubulin dimers are in GDP-bound state, owing to GTPase activity of alpha-tubulin. The sequence is that of Tubulin beta chain from Aspergillus flavus.